The sequence spans 714 residues: Polyribonucleotide nucleotidyltransferase (714 aa).

Residues D488 and D494 each coordinate Mg(2+). One can recognise a KH domain in the interval 555-614 (PRIEVMNIPTDKIRDVIGSGGKVIREIVEKTGAKINIEDDGTVKIASSNGKEIEAAKKWI). The 69-residue stretch at 624-692 (GEIYEGTVVK…ERGKVRLSMK (69 aa)) folds into the S1 motif domain.

It belongs to the polyribonucleotide nucleotidyltransferase family. It depends on Mg(2+) as a cofactor.

The protein localises to the cytoplasm. The enzyme catalyses RNA(n+1) + phosphate = RNA(n) + a ribonucleoside 5'-diphosphate. Involved in mRNA degradation. Catalyzes the phosphorolysis of single-stranded polyribonucleotides processively in the 3'- to 5'-direction. In Brucella ovis (strain ATCC 25840 / 63/290 / NCTC 10512), this protein is Polyribonucleotide nucleotidyltransferase.